Consider the following 266-residue polypeptide: 4-hydroxy-tetrahydrodipicolinate reductase (266 aa).

Residues 8–13 (GAAGRM) and Glu33 each bind NAD(+). Residue Arg34 participates in NADP(+) binding. NAD(+) is bound by residues 97-99 (GST) and 121-124 (APNM). The Proton donor/acceptor role is filled by His154. His155 contacts (S)-2,3,4,5-tetrahydrodipicolinate. Catalysis depends on Lys158, which acts as the Proton donor. 164–165 (GT) contacts (S)-2,3,4,5-tetrahydrodipicolinate.

This sequence belongs to the DapB family.

The protein resides in the cytoplasm. The enzyme catalyses (S)-2,3,4,5-tetrahydrodipicolinate + NAD(+) + H2O = (2S,4S)-4-hydroxy-2,3,4,5-tetrahydrodipicolinate + NADH + H(+). It carries out the reaction (S)-2,3,4,5-tetrahydrodipicolinate + NADP(+) + H2O = (2S,4S)-4-hydroxy-2,3,4,5-tetrahydrodipicolinate + NADPH + H(+). It functions in the pathway amino-acid biosynthesis; L-lysine biosynthesis via DAP pathway; (S)-tetrahydrodipicolinate from L-aspartate: step 4/4. Its function is as follows. Catalyzes the conversion of 4-hydroxy-tetrahydrodipicolinate (HTPA) to tetrahydrodipicolinate. This is 4-hydroxy-tetrahydrodipicolinate reductase from Geobacter sulfurreducens (strain ATCC 51573 / DSM 12127 / PCA).